A 192-amino-acid chain; its full sequence is dTTP/UTP pyrophosphatase (192 aa).

Catalysis depends on Asp-70, which acts as the Proton acceptor.

The protein belongs to the Maf family. YhdE subfamily. It depends on a divalent metal cation as a cofactor.

Its subcellular location is the cytoplasm. The enzyme catalyses dTTP + H2O = dTMP + diphosphate + H(+). It catalyses the reaction UTP + H2O = UMP + diphosphate + H(+). Functionally, nucleoside triphosphate pyrophosphatase that hydrolyzes dTTP and UTP. May have a dual role in cell division arrest and in preventing the incorporation of modified nucleotides into cellular nucleic acids. The chain is dTTP/UTP pyrophosphatase from Alkaliphilus metalliredigens (strain QYMF).